The primary structure comprises 343 residues: Protein RecA (343 aa).

66–73 (GPESSGKT) is an ATP binding site.

The protein belongs to the RecA family.

The protein localises to the cytoplasm. Functionally, can catalyze the hydrolysis of ATP in the presence of single-stranded DNA, the ATP-dependent uptake of single-stranded DNA by duplex DNA, and the ATP-dependent hybridization of homologous single-stranded DNAs. It interacts with LexA causing its activation and leading to its autocatalytic cleavage. In Rickettsia africae (strain ESF-5), this protein is Protein RecA.